Reading from the N-terminus, the 266-residue chain is Vitamin B12-binding protein (266 aa).

The first 22 residues, 1–22 (MAKSLFRALVALSFLAPLWLNA), serve as a signal peptide directing secretion. Residues 25-266 (RVITLSPANT…QLCNALSQVD (242 aa)) enclose the Fe/B12 periplasmic-binding domain. Cyanocob(III)alamin contacts are provided by residues Tyr50 and 242 to 246 (DWFER). A disulfide bridge connects residues Cys183 and Cys259.

It belongs to the BtuF family. The complex is composed of two ATP-binding proteins (BtuD), two transmembrane proteins (BtuC) and a solute-binding protein (BtuF).

The protein localises to the periplasm. Part of the ABC transporter complex BtuCDF involved in vitamin B12 import. Binds vitamin B12 and delivers it to the periplasmic surface of BtuC. The chain is Vitamin B12-binding protein from Shigella flexneri.